The following is a 4043-amino-acid chain: Polyketide synthase-nonribosomal peptide synthetase (4043 aa).

In terms of domain architecture, Ketosynthase family 3 (KS3) spans 8 to 446 (SEPIAIIGTG…GANSHAILES (439 aa)). Active-site for beta-ketoacyl synthase activity residues include cysteine 181, histidine 320, and histidine 366. The tract at residues 557–877 (VFTGQGAQWA…SRGNSDVEAF (321 aa)) is acyl transferase. Residues 944-1078 (NELLGRQVLD…CRLRITVGDS (135 aa)) are N-terminal hotdog fold. Positions 944 to 1246 (NELLGRQVLD…TQPLSSPTEA (303 aa)) constitute a PKS/mFAS DH domain. Residues 945–1243 (ELLGRQVLDG…GLQTQPLSSP (299 aa)) are dehydratase (DH) domain. The Proton acceptor; for dehydratase activity role is filled by histidine 976. Positions 1093–1246 (LLEVESDRFY…TQPLSSPTEA (154 aa)) are C-terminal hotdog fold. Aspartate 1154 serves as the catalytic Proton donor; for dehydratase activity. The tract at residues 1400–1585 (RYTKYLAAMA…GIETAIPHHD (186 aa)) is methyltransferase (MT) domain. The interval 2115-2288 (TYWLVGLTGG…NASAVHIGAI (174 aa)) is ketoreductase (KR)domain. The Carrier 1 domain maps to 2394–2475 (SSSADIYDII…EMVTQAQELL (82 aa)). The tract at residues 2395-2472 (SSADIYDIIS…TVGEMVTQAQ (78 aa)) is peptidyl carrier protein. The residue at position 2435 (serine 2435) is an O-(pantetheine 4'-phosphoryl)serine. 2 disordered regions span residues 2476–2575 (PKEL…DPSR) and 2587–2630 (EKHL…SQII). 2 stretches are compositionally biased toward polar residues: residues 2494–2512 (PKNTVQPKQQTKKTIQLQN) and 2520–2534 (ALSQQVSSGVQNMIK). The span at 2537–2550 (PPKEAEAKQPRPEV) shows a compositional bias: basic and acidic residues. Over residues 2617–2627 (TSSSSSSTSAS) the composition is skewed to low complexity. Residues 2640 to 3069 (KSVPMAFGQS…NPALRLNVPP (430 aa)) form a condensation region. The adenylation stretch occupies residues 3102–3502 (EIVERYPTHV…EGNLILGGRI (401 aa)). The 81-residue stretch at 3617-3697 (TDESPSMAKM…GMVSLIDHSE (81 aa)) folds into the Carrier 2 domain. The interval 3622–3694 (SMAKMRDVWA…SLTGMVSLID (73 aa)) is thiolation. The residue at position 3657 (serine 3657) is an O-(pantetheine 4'-phosphoryl)serine. Positions 3735–3954 (LTGATGFLGR…DFVSADRVAM (220 aa)) are reductase-like.

This sequence in the C-terminal section; belongs to the NRP synthetase family.

It functions in the pathway mycotoxin biosynthesis. Its function is as follows. Hybrid PKS-NRPS synthetase; part of the gene cluster that mediates the biosynthesis of the mycotoxins cytochalasins E and K. The hybrid PKS-NRPS synthetase ccsA and the enoyl reductase ccsC are responsible for fusion of phenylalanine with an octaketide backbone and subsequent release of the stable tetramic acid precursor. The polyketide synthase module (PKS) of the PKS-NRPS ccsA is responsible for the synthesis of the octaketide backbone. The downstream nonribosomal peptide synthetase (NRPS) amidates the carboxyl end of the octaketide with a phenylalanine. A reductase-like domain (R) at the C-terminus catalyzes the reductive release of the polyketide-amino acid intermediate. Because ccsA lacks a designated enoylreductase (ER) domain, the required activity is provided the enoyl reductase ccsC. Upon formation of the 11-membered carbocycle-fused perhydroisoindolone intermediate, a number of oxidative steps are required to afford the final cytochalasin E and K, including two hydroxylations at C17 and C18, one alcohol oxidation at C17, one epoxidation at C6 and C7 and two Baeyer-Villiger oxidations. The oxidative modification at C17, C18 and the C6-C7 epoxidation are likely to be catalyzed by the two cytochrome P450 oxygenases ccsD and ccsG. CcsD may be responsible for the epoxidation of the C6-C7 double bond. CcsG may be responsible for the successive oxidative modifications at C17 and C18. The double Baeyer-Villiger oxidations of ketocytochalasin to precytochalasin and cytochalasin Z(16) are among the final steps leading to cytochalasin E and K and are catalyzed by ccsB. The first oxygen insertion step follows that of the classic BVMO mechanism, generating the ester precytochalasin. Release of precytochalasin into an aqueous environment can generate the shunt product iso-precytochalasin through spontaneous isomerization. Alternatively, precytochalasin can undergo further oxidation by ccsB to yield the in-line carbonate-containing cytochalasin Z(16). Cytochalasin Z(16) is a precursor to cytochalasin E and cytochalasin K, whereas iso-precytochalasin is a precursor to cytochalasin Z(17) and rosellichalasin. The hydrolyase ccsE may catalyze hydrolysis of epoxide bond in cytochalasin E to afford cytochalasin K. The function of ccsF has not been assigned but it may play a role in post-PKS-NRPS biosynthetic step, resistance or transport of cytochalasins and related PKS-NRPS products. The protein is Polyketide synthase-nonribosomal peptide synthetase of Aspergillus clavatus (strain ATCC 1007 / CBS 513.65 / DSM 816 / NCTC 3887 / NRRL 1 / QM 1276 / 107).